We begin with the raw amino-acid sequence, 388 residues long: Succinate--CoA ligase [ADP-forming] subunit beta (388 aa).

The ATP-grasp domain maps to K9–K236. Residues K45, G52 to G54, E91, S94, and E99 contribute to the ATP site. Residues N191 and D205 each contribute to the Mg(2+) site. Residues N256 and G318–T320 each bind substrate.

The protein belongs to the succinate/malate CoA ligase beta subunit family. As to quaternary structure, heterotetramer of two alpha and two beta subunits. Requires Mg(2+) as cofactor.

It carries out the reaction succinate + ATP + CoA = succinyl-CoA + ADP + phosphate. The catalysed reaction is GTP + succinate + CoA = succinyl-CoA + GDP + phosphate. The protein operates within carbohydrate metabolism; tricarboxylic acid cycle; succinate from succinyl-CoA (ligase route): step 1/1. Functionally, succinyl-CoA synthetase functions in the citric acid cycle (TCA), coupling the hydrolysis of succinyl-CoA to the synthesis of either ATP or GTP and thus represents the only step of substrate-level phosphorylation in the TCA. The beta subunit provides nucleotide specificity of the enzyme and binds the substrate succinate, while the binding sites for coenzyme A and phosphate are found in the alpha subunit. This chain is Succinate--CoA ligase [ADP-forming] subunit beta, found in Frankia casuarinae (strain DSM 45818 / CECT 9043 / HFP020203 / CcI3).